An 88-amino-acid chain; its full sequence is MISKEQKLALIKEFGGSEKNTGLAEVQIAILTAEISNMTEHLKMHKKDIPTRRSLLKKVAQRRHFLDYLVKKDVNRYKEIIEKLGIRK.

Belongs to the universal ribosomal protein uS15 family. Part of the 30S ribosomal subunit. Forms a bridge to the 50S subunit in the 70S ribosome, contacting the 23S rRNA.

One of the primary rRNA binding proteins, it binds directly to 16S rRNA where it helps nucleate assembly of the platform of the 30S subunit by binding and bridging several RNA helices of the 16S rRNA. Functionally, forms an intersubunit bridge (bridge B4) with the 23S rRNA of the 50S subunit in the ribosome. The chain is Small ribosomal subunit protein uS15 from Mycoplasma capricolum subsp. capricolum (strain California kid / ATCC 27343 / NCTC 10154).